Here is a 39-residue protein sequence, read N- to C-terminus: Natriuretic peptide PaNP-d (39 aa).

The propeptide occupies 1–8 (SGSKTAEI). A disordered region spans residues 1-39 (SGSKTAEIDDGCFGLPLDPIGSTSGMGCRSVPKPIPGGS). An intrachain disulfide couples Cys12 to Cys28.

The protein belongs to the natriuretic peptide family. In terms of tissue distribution, expressed by the venom gland.

Its subcellular location is the secreted. Snake venom natriuretic peptide that targets both NPR1 and NPR2. Exhibits hypotensive and vasodepressor activities. The polypeptide is Natriuretic peptide PaNP-d (Pseudechis australis (Mulga snake)).